Here is a 394-residue protein sequence, read N- to C-terminus: Elongation factor Tu 2 (394 aa).

One can recognise a tr-type G domain in the interval 10 to 204 (KPHVNVGTIG…ALDNYIPEPE (195 aa)). Positions 19 to 26 (GHVDHGKT) are G1. 19–26 (GHVDHGKT) provides a ligand contact to GTP. Thr-26 contacts Mg(2+). The interval 60–64 (GITIS) is G2. Residues 81–84 (DCPG) are G3. GTP-binding positions include 81-85 (DCPGH) and 136-139 (NKCD). Positions 136–139 (NKCD) are G4. Residues 174–176 (SAL) form a G5 region.

It belongs to the TRAFAC class translation factor GTPase superfamily. Classic translation factor GTPase family. EF-Tu/EF-1A subfamily. As to quaternary structure, monomer.

It is found in the cytoplasm. The catalysed reaction is GTP + H2O = GDP + phosphate + H(+). Functionally, GTP hydrolase that promotes the GTP-dependent binding of aminoacyl-tRNA to the A-site of ribosomes during protein biosynthesis. The chain is Elongation factor Tu 2 from Photobacterium profundum (strain SS9).